The sequence spans 396 residues: Probable sugar efflux transporter (396 aa).

The next 12 membrane-spanning stretches (helical) occupy residues 15–35 (VVTL…PVGL), 50–70 (VGIM…PFML), 81–101 (LICL…SWSF), 103–123 (VLVI…SITA), 136–156 (AQAL…GLPL), 170–190 (FFAI…LLPL), 209–229 (PALM…YTAY), 246–266 (FATA…VIFG), 275–295 (ALVS…LPAA), 299–319 (IHLG…GLGM), 333–353 (VAMA…ALVG), and 364–384 (MIGY…IIIF).

The protein belongs to the major facilitator superfamily. SotB (TC 2.A.1.2) family.

It localises to the cell inner membrane. In terms of biological role, involved in the efflux of sugars. The physiological role may be the reduction of the intracellular concentration of toxic sugars or sugar metabolites. The protein is Probable sugar efflux transporter of Escherichia coli O6:K15:H31 (strain 536 / UPEC).